We begin with the raw amino-acid sequence, 430 residues long: MTNVVVVGAQWGDEGKGKIVDWLSEQADIVVRFQGGHNAGHTLVIDGNTYKLALLPSGVVRSSKLSIIGNGVVFDPQAFVDEVAKLKGQGVKIGPDNLRVAENVTLILPLHRELDSLRENASAATAIGTTQRGIGPAYEDKVGRRAIRLMDLADPQTLPHKVERLLTHHNALRRGHGIAEVDSGALLKDLAAIAPRVLPYADSVWNLLDHKRREGKRILFEGAQGALLDVDHGTYPYVTSSNTVAAQAATGTGMGPSALGYVLGICKSYTTRVGQGPFPTELKDEIGELIGQRGKEFGVNTGRKRRCGWFDAMLVRQTVRTSGIHGLALTKLDILDGFDTIEVCTGYRLDGKEIDHLPAGEGAQARVEPIYETIEGWKQPTANARSWADLPAQAIKYVRRIEELVGCPVALLSTSPEREDTILVQNPFEA.

GTP is bound by residues 12–18 and 40–42; these read GDEGKGK and GHT. The active-site Proton acceptor is aspartate 13. Aspartate 13 and glycine 40 together coordinate Mg(2+). IMP contacts are provided by residues 13 to 16, 38 to 41, threonine 130, arginine 144, glutamine 224, threonine 239, and arginine 303; these read DEGK and NAGH. Residue histidine 41 is the Proton donor of the active site. 299–305 is a binding site for substrate; the sequence is VNTGRKR. Residues arginine 305, 331–333, and 413–415 each bind GTP; these read KLD and STS.

This sequence belongs to the adenylosuccinate synthetase family. In terms of assembly, homodimer. Requires Mg(2+) as cofactor.

It localises to the cytoplasm. The catalysed reaction is IMP + L-aspartate + GTP = N(6)-(1,2-dicarboxyethyl)-AMP + GDP + phosphate + 2 H(+). The protein operates within purine metabolism; AMP biosynthesis via de novo pathway; AMP from IMP: step 1/2. In terms of biological role, plays an important role in the de novo pathway of purine nucleotide biosynthesis. Catalyzes the first committed step in the biosynthesis of AMP from IMP. This chain is Adenylosuccinate synthetase, found in Nitrobacter hamburgensis (strain DSM 10229 / NCIMB 13809 / X14).